The sequence spans 180 residues: ATP-dependent protease subunit HslV (180 aa).

Residue Thr-7 is part of the active site. 3 residues coordinate Na(+): Ala-165, Cys-168, and Thr-171.

This sequence belongs to the peptidase T1B family. HslV subfamily. In terms of assembly, a double ring-shaped homohexamer of HslV is capped on each side by a ring-shaped HslU homohexamer. The assembly of the HslU/HslV complex is dependent on binding of ATP.

It localises to the cytoplasm. It catalyses the reaction ATP-dependent cleavage of peptide bonds with broad specificity.. Its activity is regulated as follows. Allosterically activated by HslU binding. Its function is as follows. Protease subunit of a proteasome-like degradation complex believed to be a general protein degrading machinery. The chain is ATP-dependent protease subunit HslV from Geobacillus sp. (strain WCH70).